The chain runs to 242 residues: B-box zinc finger protein 20 (242 aa).

The Zn(2+) site is built by cysteine 5, cysteine 8, cysteine 28, histidine 33, cysteine 58, cysteine 61, cysteine 81, and histidine 91. A B box-type 1; atypical zinc finger spans residues 5 to 47 (CAVCDKEEASVFCCADEAALCNGCDRHVHFANKLAGKHLRFSL). The segment at 58–100 (CDICGERRALLFCQEDRAILCRECDIPIHQANEHTKKHNRFLL) adopts a B box-type 2; atypical zinc-finger fold. The tract at residues 112-153 (YPRASNSNSAAAFGRAKTRPKSVSSEVPSSASNEVFTSSSST) is disordered. Over residues 133-153 (SVSSEVPSSASNEVFTSSSST) the composition is skewed to low complexity.

In terms of assembly, interacts with MED25 and COP1. Post-translationally, COP1-mediated ubiquitination and subsequent proteasomal degradation of BBX20 occurs in the dark.

The protein localises to the nucleus. In terms of biological role, acts as a positive regulator of seedling photomorphogenesis. Plays a negative role in brassinosteroid responses. The sequence is that of B-box zinc finger protein 20 from Arabidopsis thaliana (Mouse-ear cress).